The chain runs to 454 residues: Epsin-1 (454 aa).

An ENTH domain is found at 11 to 143 (NLVKGYSSTQ…SDDERLNEER (133 aa)). Disordered stretches follow at residues 142 to 195 (ERNM…EDYE) and 292 to 350 (YLAS…GNQS). Over residues 149 to 160 (GRNRKGRRRRGT) the composition is skewed to basic residues. Residue T160 is modified to Phosphothreonine. S163 is modified (phosphoserine). 2 consecutive UIM domains span residues 165 to 184 (ENDD…AEED) and 189 to 208 (KQDE…EELK). Phosphothreonine is present on T180. The span at 180 to 191 (TAEEDERRRKQD) shows a compositional bias: basic and acidic residues. Residues 292–302 (YLASMQQQQQA) are compositionally biased toward low complexity. Composition is skewed to polar residues over residues 303–329 (MSNN…ASSP) and 340–350 (PLIQNRTGNQS). At S328 the chain carries Phosphoserine. K357 participates in a covalent cross-link: Glycyl lysine isopeptide (Lys-Gly) (interchain with G-Cter in ubiquitin). Residues T364, T366, T384, T386, and T388 each carry the phosphothreonine modification. Polar residues predominate over residues 384–398 (TKTGTFINSQGTGYR). Positions 384 to 405 (TKTGTFINSQGTGYRQVSDDPN) are disordered. 2 positions are modified to phosphothreonine; by PRK1: T395 and T415. Polar residues predominate over residues 418 to 428 (PSTSVVPTQTG). The segment at 418–454 (PSTSVVPTQTGYGFGNQSQQQSQNNGSNNRGYTLIDL) is disordered. Positions 432 to 446 (GNQSQQQSQNNGSNN) are enriched in low complexity. Residues 447 to 454 (RGYTLIDL) form a clathrin-binding region.

The protein belongs to the epsin family. In terms of assembly, interacts with EDE1 and PAN1.

It is found in the cytoplasm. The protein localises to the membrane. Binds to membranes enriched in phosphatidylinositol 3,5-bisphosphate (PtdIns(3,5)P2) and phosphatidylinositol 4,5-bisphosphate (PtdIns(4,5)P2). Required for endocytosis and localization of actin. Negatively regulated via phosphorylation. The protein is Epsin-1 (ENT1) of Saccharomyces cerevisiae (strain ATCC 204508 / S288c) (Baker's yeast).